Here is a 291-residue protein sequence, read N- to C-terminus: 4-diphosphocytidyl-2-C-methyl-D-erythritol kinase (291 aa).

K10 is an active-site residue. 99 to 109 (PMGGGLGGGSS) is a binding site for ATP. D141 is a catalytic residue.

The protein belongs to the GHMP kinase family. IspE subfamily. In terms of assembly, homodimer.

The enzyme catalyses 4-CDP-2-C-methyl-D-erythritol + ATP = 4-CDP-2-C-methyl-D-erythritol 2-phosphate + ADP + H(+). Its pathway is isoprenoid biosynthesis; isopentenyl diphosphate biosynthesis via DXP pathway; isopentenyl diphosphate from 1-deoxy-D-xylulose 5-phosphate: step 3/6. In terms of biological role, catalyzes the phosphorylation of the position 2 hydroxy group of 4-diphosphocytidyl-2C-methyl-D-erythritol. The chain is 4-diphosphocytidyl-2-C-methyl-D-erythritol kinase from Proteus mirabilis (strain HI4320).